A 216-amino-acid chain; its full sequence is MDANMNNLLKWSIQNSTTQQSDAPNASNNTADSSARGLTPEMLSALFGGPSDADLMKAAMEALHSDEVDLENKLIAFDNFEQLIESIDNANNLEPLGLWTPLVELLQHEEAEMRRMAAWCIGTAVQNNEKAQDKLVVFNAVPKLVTMSTTDSNPATRKKAVFALSSAVRNYQPAMDELVKHLPEGYSQGEKVDAGDMDAVDAIMDRLRAHPVPSSA.

The segment covering 16-33 has biased composition (polar residues); it reads STTQQSDAPNASNNTADS. The segment at 16 to 35 is disordered; it reads STTQQSDAPNASNNTADSSA. ARM repeat units follow at residues 27 to 68, 87 to 126, and 129 to 169; these read SNNT…SDEV, IDNA…TAVQ, and EKAQ…SAVR.

This sequence belongs to the FES1 family.

The protein localises to the cytoplasm. Its function is as follows. Functions as a nucleotide exchange factor (NEF) for Hsp70 chaperones which accelerates the release of ADP. Required for fully efficient Hsp70-mediated folding of proteins. This is Hsp70 nucleotide exchange factor fes1 (fes1) from Aspergillus oryzae (strain ATCC 42149 / RIB 40) (Yellow koji mold).